We begin with the raw amino-acid sequence, 285 residues long: Mitochondrial substrate carrier family protein L (285 aa).

Topologically, residues 1-13 (MIASKETKEKIRN) are mitochondrial intermembrane. Solcar repeat units follow at residues 8-94 (KEKI…VKSK), 103-185 (ISLG…AQRY), and 193-282 (MTMG…VMKF). A helical membrane pass occupies residues 14–34 (FIGGFASGAASTLAGHPFDTL). Over 35–69 (KVRLQTEGSTGRFRGLAHCFTTTIKEEGFFALYKG) the chain is Mitochondrial matrix. The chain crosses the membrane as a helical span at residues 70-90 (VTPPLLGMSIINSCMFGAMNI). Residues 91-102 (VKSKIHTDKSTP) lie on the Mitochondrial intermembrane side of the membrane. Residues 103–123 (ISLGEIMVSGAITGWIVSFVA) traverse the membrane as a helical segment. The Mitochondrial matrix portion of the chain corresponds to 124-156 (CPIETVKSKLQVQYTGVKLYNGPIDCIKKIGIR). The chain crosses the membrane as a helical span at residues 157–177 (GLYKALIPTGFQRNSLYAYFG). The Mitochondrial intermembrane portion of the chain corresponds to 178–198 (CYELAQRYLRREDGSMTMGRS). Residues 199 to 219 (FIAGGIAGTGFWLTNFPFDVI) traverse the membrane as a helical segment. The Mitochondrial matrix segment spans residues 220 to 256 (RSRIMTMPYNESPPRYKGMIDCAKHIYRVDGLKGFWK). A helical transmembrane segment spans residues 257–277 (GFSPCLLRTFPANGATFVAYE). Over 278–285 (CVMKFFPM) the chain is Mitochondrial intermembrane.

Belongs to the mitochondrial carrier (TC 2.A.29) family.

It localises to the mitochondrion inner membrane. Functionally, mitochondrial solute carriers shuttle metabolites, nucleotides, and cofactors through the mitochondrial inner membrane. In Dictyostelium discoideum (Social amoeba), this protein is Mitochondrial substrate carrier family protein L (mcfL).